Reading from the N-terminus, the 643-residue chain is Protein tramtrack, beta isoform (643 aa).

Residues threonine 33 to glutamine 98 enclose the BTB domain. 2 disordered regions span residues glutamate 118–glutamine 148 and alanine 171–threonine 300. Lysine 123 participates in a covalent cross-link: Glycyl lysine isopeptide (Lys-Gly) (interchain with G-Cter in ubiquitin). The segment covering serine 125–proline 145 has biased composition (low complexity). Positions threonine 176–serine 187 are enriched in polar residues. Basic residues predominate over residues proline 192–lysine 201. A Glycyl lysine isopeptide (Lys-Gly) (interchain with G-Cter in ubiquitin) cross-link involves residue lysine 201. The span at histidine 254–asparagine 285 shows a compositional bias: basic and acidic residues. Residues lysine 355, lysine 397, lysine 418, lysine 457, lysine 478, and lysine 480 each participate in a glycyl lysine isopeptide (Lys-Gly) (interchain with G-Cter in ubiquitin) cross-link. 2 C2H2-type zinc fingers span residues tyrosine 508–histidine 531 and tyrosine 538–histidine 561. Lysine 545 is covalently cross-linked (Glycyl lysine isopeptide (Lys-Gly) (interchain with G-Cter in ubiquitin)). Residues glycine 584–glutamine 643 are disordered. The segment covering serine 604–glutamine 643 has biased composition (low complexity).

As to quaternary structure, can form homodimers. Interacts with Trl in vivo via the BTB domain. Interacts with phyl. Interacts with Usp47. In terms of processing, polyubiquitinated by sina. Polyubiquitin linkage is mainly through 'Lys-48', but linkage through 'Lys-63' also occurs. Deubiquitination by Usp47 leads to its stabilization.

It localises to the nucleus. Binds to a number of sites in the transcriptional regulatory region of ftz. Isoform beta is required to repress inappropriate segmentation gene transcription and repress genes incompatible with development of photoreceptor cell fates. Probable repressor of the transcription of the segmentation genes ftz, eve, h, odd, run, and en. Inhibits Trl-dependent activation of eve. May bind to the region AGGGC/TGG. Degradation of ttk is directed by binding of sinah or sina, via the adapter molecule phyl which binds to the BTB domain of ttk. A second method of degradation exists that is phyl-independent, this is mediated by recognition of motifs in the C-terminus of ttk. This chain is Protein tramtrack, beta isoform (ttk), found in Drosophila melanogaster (Fruit fly).